The following is a 98-amino-acid chain: Plastocyanin (98 aa).

Residues 1–98 (AAIVKLGGDD…AGMKMTITVQ (98 aa)) form the Plastocyanin-like domain. Residues His-38, Cys-83, His-86, and Met-91 each coordinate Cu cation.

It belongs to the plastocyanin family. It depends on Cu(2+) as a cofactor.

It localises to the plastid. The protein localises to the chloroplast thylakoid membrane. In terms of biological role, participates in electron transfer between P700 and the cytochrome b6-f complex in photosystem I. The sequence is that of Plastocyanin (PETE) from Ulva prolifera (Green seaweed).